The sequence spans 303 residues: Ribose-5-phosphate isomerase (303 aa).

Gly residues predominate over residues 22-33; it reads AGGAASGGGGNN. Residues 22-75 are disordered; sequence AGGAASGGGGNNWGLSGSHVQLPGRAHSETRGDKGGSSAGGPAPSTMSKAEEAK. At Arg-52 the chain carries Omega-N-methylarginine. Ser-99 is subject to Phosphoserine.

Belongs to the ribose 5-phosphate isomerase family. As to expression, widely expressed, with highest levels in testis.

It catalyses the reaction aldehydo-D-ribose 5-phosphate = D-ribulose 5-phosphate. It participates in carbohydrate degradation; pentose phosphate pathway; D-ribose 5-phosphate from D-ribulose 5-phosphate (non-oxidative stage): step 1/1. The protein is Ribose-5-phosphate isomerase (Rpia) of Mus musculus (Mouse).